The sequence spans 443 residues: UDP-N-acetylmuramate--L-alanine ligase (443 aa).

ATP is bound at residue Gly111 to Ser117.

The protein belongs to the MurCDEF family.

It localises to the cytoplasm. The catalysed reaction is UDP-N-acetyl-alpha-D-muramate + L-alanine + ATP = UDP-N-acetyl-alpha-D-muramoyl-L-alanine + ADP + phosphate + H(+). It participates in cell wall biogenesis; peptidoglycan biosynthesis. In terms of biological role, cell wall formation. This is UDP-N-acetylmuramate--L-alanine ligase from Ligilactobacillus salivarius (strain UCC118) (Lactobacillus salivarius).